A 948-amino-acid chain; its full sequence is Receptor-like protein 45 (948 aa).

Positions 1 to 26 (MSSSKLMDFGLTWIIMMMILLQGCRS) are cleaved as a signal peptide. Topologically, residues 27-897 (CIESERQGLL…EDDDESGLLD (871 aa)) are extracellular. Residues Asn99 and Asn113 are each glycosylated (N-linked (GlcNAc...) asparagine). 2 LRR repeats span residues 106-129 (FEEL…RKGG) and 135-162 (LRNL…AVSL). The LRR 3; degenerate repeat unit spans residues 163–183 (KTLILHDNLFKGGFPVQELIN). N-linked (GlcNAc...) asparagine glycosylation occurs at Asn183. LRR repeat units follow at residues 184–208 (LTSL…ELTN), 210–233 (RNLR…GICR), 234–257 (LEQL…CFSR), 258–284 (FSKL…DFKS), 286–306 (EYLS…LITE), 307–332 (LTEL…VSGG), 334–357 (QSQL…LWYQ), 358–381 (QELR…LLEN), 382–404 (NTEL…PRTM), 405–429 (RRLQ…GLIL), 430–453 (ASLR…MARM), 454–477 (ENIE…LFTG), 479–502 (YSLS…SSDE), 503–526 (TSLI…LLNL), 527–549 (RMLS…WLGN), 550–573 (FFLE…LFNI), 575–595 (YLWL…LRSS), 596–618 (SDYG…DTLW), 619–640 (YGLR…LFRS), 642–665 (PSIS…LCGL), 666–689 (SNVR…VTNL), 758–782 (LNQM…LGDL), 783–805 (KRVR…SFSN), 807–831 (RSIE…TLLQ), and 833–855 (LVVF…QFNT). The N-linked (GlcNAc...) asparagine glycan is linked to Asn328. 2 N-linked (GlcNAc...) asparagine glycosylation sites follow: Asn381 and Asn392. N-linked (GlcNAc...) asparagine glycans are attached at residues Asn436 and Asn465. The N-linked (GlcNAc...) asparagine glycan is linked to Asn608. Asn653, Asn679, and Asn688 each carry an N-linked (GlcNAc...) asparagine glycan. An N-linked (GlcNAc...) asparagine glycan is attached at Asn789. Asn837 and Asn842 each carry an N-linked (GlcNAc...) asparagine glycan. The chain crosses the membrane as a helical span at residues 898–918 (IVVLWWSLGTTYVTVMMGFLV). Over 919–948 (FLCFDSPWRRAWFCLVDTFIDRVKDVLGVI) the chain is Cytoplasmic.

It belongs to the RLP family.

Its subcellular location is the cell membrane. This chain is Receptor-like protein 45, found in Arabidopsis thaliana (Mouse-ear cress).